The chain runs to 388 residues: Succinate--CoA ligase [ADP-forming] subunit beta (388 aa).

The ATP-grasp domain occupies 9–244; the sequence is KQLFAEYGLP…PSQEDEREAH (236 aa). ATP is bound by residues Lys46, 53–55, Glu99, Thr102, and Glu107; that span reads GRG. Mg(2+) contacts are provided by Asn199 and Asp213. Substrate is bound by residues Asn264 and 321-323; that span reads GIV.

It belongs to the succinate/malate CoA ligase beta subunit family. Heterotetramer of two alpha and two beta subunits. Mg(2+) serves as cofactor.

The enzyme catalyses succinate + ATP + CoA = succinyl-CoA + ADP + phosphate. It catalyses the reaction GTP + succinate + CoA = succinyl-CoA + GDP + phosphate. Its pathway is carbohydrate metabolism; tricarboxylic acid cycle; succinate from succinyl-CoA (ligase route): step 1/1. Functionally, succinyl-CoA synthetase functions in the citric acid cycle (TCA), coupling the hydrolysis of succinyl-CoA to the synthesis of either ATP or GTP and thus represents the only step of substrate-level phosphorylation in the TCA. The beta subunit provides nucleotide specificity of the enzyme and binds the substrate succinate, while the binding sites for coenzyme A and phosphate are found in the alpha subunit. The protein is Succinate--CoA ligase [ADP-forming] subunit beta of Marinomonas sp. (strain MWYL1).